A 167-amino-acid polypeptide reads, in one-letter code: Acetolactate synthase small subunit (167 aa).

An ACT domain is found at 7-81 (TLSVLVEAKP…NVIKIVELED (75 aa)).

The protein belongs to the acetolactate synthase small subunit family. Dimer of large and small chains.

The catalysed reaction is 2 pyruvate + H(+) = (2S)-2-acetolactate + CO2. Its pathway is amino-acid biosynthesis; L-isoleucine biosynthesis; L-isoleucine from 2-oxobutanoate: step 1/4. It participates in amino-acid biosynthesis; L-valine biosynthesis; L-valine from pyruvate: step 1/4. This Mycobacterium avium protein is Acetolactate synthase small subunit (ilvH).